Here is a 321-residue protein sequence, read N- to C-terminus: Cytoskeleton protein RodZ (321 aa).

Over 1–111 (MNTEATHDQN…LGKRRKKRDG (111 aa)) the chain is Cytoplasmic. The HTH cro/C1-type domain maps to 19–71 (LRNAREQLGLSQQAVAERLCLKVSTVRDIEEDKAPSDLASTFLRGYIRSYARL). Residues 30–49 (QQAVAERLCLKVSTVRDIEE) constitute a DNA-binding region (H-T-H motif). The chain crosses the membrane as a helical; Signal-anchor for type II membrane protein span at residues 112–132 (WLMSFTWLVLFVVVGLTGAWW). At 133–321 (WQNHKAQQEE…TINAEPTSAQ (189 aa)) the chain is on the periplasmic side. The interval 167–190 (DTRAAASQDTTPAETAPAAPVDST) is disordered. Low complexity predominate over residues 176–190 (TTPAETAPAAPVDST).

It belongs to the RodZ family.

It is found in the cell inner membrane. In terms of biological role, cytoskeletal protein that is involved in cell-shape control through regulation of the length of the long axis. In Salmonella arizonae (strain ATCC BAA-731 / CDC346-86 / RSK2980), this protein is Cytoskeleton protein RodZ.